The chain runs to 123 residues: Large ribosomal subunit protein bL12 (123 aa).

Belongs to the bacterial ribosomal protein bL12 family. Homodimer. Part of the ribosomal stalk of the 50S ribosomal subunit. Forms a multimeric L10(L12)X complex, where L10 forms an elongated spine to which 2 to 4 L12 dimers bind in a sequential fashion. Binds GTP-bound translation factors.

Forms part of the ribosomal stalk which helps the ribosome interact with GTP-bound translation factors. Is thus essential for accurate translation. The chain is Large ribosomal subunit protein bL12 from Shewanella sp. (strain MR-4).